An 883-amino-acid chain; its full sequence is Phosphoenolpyruvate carboxylase (883 aa).

Residues histidine 138 and lysine 546 contribute to the active site.

The protein belongs to the PEPCase type 1 family. Requires Mg(2+) as cofactor.

It carries out the reaction oxaloacetate + phosphate = phosphoenolpyruvate + hydrogencarbonate. Functionally, forms oxaloacetate, a four-carbon dicarboxylic acid source for the tricarboxylic acid cycle. This is Phosphoenolpyruvate carboxylase from Salmonella paratyphi A (strain ATCC 9150 / SARB42).